Reading from the N-terminus, the 239-residue chain is Small ribosomal subunit protein uS3c (239 aa).

Residues 43-139 (IKNYIQKNRK…RFNISIEKVK (97 aa)) form the KH type-2 domain. Residues 50–74 (NRKKGSNRKIESDSSSEVITHNRKM) form a disordered region.

Belongs to the universal ribosomal protein uS3 family. In terms of assembly, part of the 30S ribosomal subunit.

The protein resides in the plastid. It is found in the chloroplast. This chain is Small ribosomal subunit protein uS3c (rps3), found in Triticum aestivum (Wheat).